Reading from the N-terminus, the 415-residue chain is Serine hydroxymethyltransferase (415 aa).

(6S)-5,6,7,8-tetrahydrofolate-binding positions include Leu122 and 126–128 (GHL). Residue Lys230 is modified to N6-(pyridoxal phosphate)lysine.

It belongs to the SHMT family. As to quaternary structure, homodimer. Pyridoxal 5'-phosphate is required as a cofactor.

It localises to the cytoplasm. It carries out the reaction (6R)-5,10-methylene-5,6,7,8-tetrahydrofolate + glycine + H2O = (6S)-5,6,7,8-tetrahydrofolate + L-serine. It functions in the pathway one-carbon metabolism; tetrahydrofolate interconversion. It participates in amino-acid biosynthesis; glycine biosynthesis; glycine from L-serine: step 1/1. Catalyzes the reversible interconversion of serine and glycine with tetrahydrofolate (THF) serving as the one-carbon carrier. This reaction serves as the major source of one-carbon groups required for the biosynthesis of purines, thymidylate, methionine, and other important biomolecules. Also exhibits THF-independent aldolase activity toward beta-hydroxyamino acids, producing glycine and aldehydes, via a retro-aldol mechanism. This is Serine hydroxymethyltransferase from Ralstonia pickettii (strain 12J).